The primary structure comprises 213 residues: Pyrrolidone-carboxylate peptidase (213 aa).

Residues Glu-78, Cys-141, and His-165 contribute to the active site.

Belongs to the peptidase C15 family. As to quaternary structure, homotetramer.

The protein localises to the cytoplasm. It carries out the reaction Release of an N-terminal pyroglutamyl group from a polypeptide, the second amino acid generally not being Pro.. Its function is as follows. Removes 5-oxoproline from various penultimate amino acid residues except L-proline. This Staphylococcus saprophyticus subsp. saprophyticus (strain ATCC 15305 / DSM 20229 / NCIMB 8711 / NCTC 7292 / S-41) protein is Pyrrolidone-carboxylate peptidase.